The chain runs to 571 residues: Sulfite reductase [NADPH] hemoprotein beta-component (571 aa).

Positions 435, 441, 480, and 484 each coordinate [4Fe-4S] cluster. Cysteine 484 provides a ligand contact to siroheme.

The protein belongs to the nitrite and sulfite reductase 4Fe-4S domain family. In terms of assembly, alpha(8)-beta(8). The alpha component is a flavoprotein, the beta component is a hemoprotein. Requires siroheme as cofactor. [4Fe-4S] cluster serves as cofactor.

It catalyses the reaction hydrogen sulfide + 3 NADP(+) + 3 H2O = sulfite + 3 NADPH + 4 H(+). It functions in the pathway sulfur metabolism; hydrogen sulfide biosynthesis; hydrogen sulfide from sulfite (NADPH route): step 1/1. Functionally, component of the sulfite reductase complex that catalyzes the 6-electron reduction of sulfite to sulfide. This is one of several activities required for the biosynthesis of L-cysteine from sulfate. This chain is Sulfite reductase [NADPH] hemoprotein beta-component, found in Erwinia tasmaniensis (strain DSM 17950 / CFBP 7177 / CIP 109463 / NCPPB 4357 / Et1/99).